The following is a 340-amino-acid chain: UDP-3-O-acylglucosamine N-acyltransferase (340 aa).

H238 serves as the catalytic Proton acceptor.

It belongs to the transferase hexapeptide repeat family. LpxD subfamily. As to quaternary structure, homotrimer.

The catalysed reaction is a UDP-3-O-[(3R)-3-hydroxyacyl]-alpha-D-glucosamine + a (3R)-hydroxyacyl-[ACP] = a UDP-2-N,3-O-bis[(3R)-3-hydroxyacyl]-alpha-D-glucosamine + holo-[ACP] + H(+). The protein operates within bacterial outer membrane biogenesis; LPS lipid A biosynthesis. Functionally, catalyzes the N-acylation of UDP-3-O-acylglucosamine using 3-hydroxyacyl-ACP as the acyl donor. Is involved in the biosynthesis of lipid A, a phosphorylated glycolipid that anchors the lipopolysaccharide to the outer membrane of the cell. In Shewanella denitrificans (strain OS217 / ATCC BAA-1090 / DSM 15013), this protein is UDP-3-O-acylglucosamine N-acyltransferase.